Consider the following 430-residue polypeptide: Enolase (430 aa).

Gln-164 serves as a coordination point for (2R)-2-phosphoglycerate. Residue Glu-208 is the Proton donor of the active site. Positions 245, 288, and 315 each coordinate Mg(2+). Residues Lys-340, Arg-369, Ser-370, and Lys-391 each contribute to the (2R)-2-phosphoglycerate site. Lys-340 functions as the Proton acceptor in the catalytic mechanism.

This sequence belongs to the enolase family. It depends on Mg(2+) as a cofactor.

Its subcellular location is the cytoplasm. The protein resides in the secreted. It localises to the cell surface. It catalyses the reaction (2R)-2-phosphoglycerate = phosphoenolpyruvate + H2O. It participates in carbohydrate degradation; glycolysis; pyruvate from D-glyceraldehyde 3-phosphate: step 4/5. In terms of biological role, catalyzes the reversible conversion of 2-phosphoglycerate (2-PG) into phosphoenolpyruvate (PEP). It is essential for the degradation of carbohydrates via glycolysis. The polypeptide is Enolase (Thermococcus onnurineus (strain NA1)).